The primary structure comprises 144 residues: MAKKVVGYIKLQIPAGKANPSPPVGPALGQRGLNIMQFCKDFNAATQGMEVGMPVPVVITAYADRTFSFITKTPPNTYFLKKAAGIQKGSTATGKGATVGKVTMSQLREIAQTKMVHMNANDVDGAVRMLVGSARSMGLSVVEG.

Belongs to the universal ribosomal protein uL11 family. In terms of assembly, part of the ribosomal stalk of the 50S ribosomal subunit. Interacts with L10 and the large rRNA to form the base of the stalk. L10 forms an elongated spine to which L12 dimers bind in a sequential fashion forming a multimeric L10(L12)X complex. In terms of processing, one or more lysine residues are methylated.

In terms of biological role, forms part of the ribosomal stalk which helps the ribosome interact with GTP-bound translation factors. In Acidiphilium cryptum (strain JF-5), this protein is Large ribosomal subunit protein uL11.